Here is a 535-residue protein sequence, read N- to C-terminus: Large neutral amino acids transporter small subunit 2 (535 aa).

The span at Met1 to Gly17 shows a compositional bias: basic and acidic residues. The tract at residues Met1 to Gly30 is disordered. Residues Met1 to Ser44 lie on the Cytoplasmic side of the membrane. Ser29 is modified (phosphoserine). Residues Ala45–Val65 form a helical membrane-spanning segment. Ile53 serves as a coordination point for L-leucine. Over Leu66 to Gly73 the chain is Extracellular. Residues Leu74 to Glu95 traverse the membrane as a helical segment. Residues Leu96–Gly116 are Cytoplasmic-facing. The helical transmembrane segment at Leu117–Pro149 threads the bilayer. L-tryptophan is bound at residue Asn134. The Extracellular segment spans residues Leu150 to Pro157. The chain crosses the membrane as a helical span at residues Glu158–Ser178. Residues Ser179–Arg181 lie on the Cytoplasmic side of the membrane. Residues Trp182–Cys210 form a helical membrane-spanning segment. Topologically, residues Lys211–Asp230 are extracellular. The helical transmembrane segment at Ile231–Asn252 threads the bilayer. An L-leucine-binding site is contributed by Gly246. Topologically, residues Tyr253–Leu265 are cytoplasmic. A helical transmembrane segment spans residues Pro266–Tyr287. At Val288–Gly312 the chain is on the extracellular side. Residues Val313–Ser338 form a helical membrane-spanning segment. Over Arg339–Pro364 the chain is Cytoplasmic. Residues Ile365–Ser382 form a helical membrane-spanning segment. Residues Asp383–Thr386 are Extracellular-facing. The chain crosses the membrane as a helical span at residues Leu387–Val408. An L-tryptophan-binding site is contributed by Asn395. Over Leu409–Asn423 the chain is Cytoplasmic. The next 2 membrane-spanning stretches (helical) occupy residues Leu424–Pro446 and Val447–Gly466. Residues Val467–Pro535 are Cytoplasmic-facing. Residues Ser502–Pro535 form a disordered region. Residues Gln514–Pro523 are compositionally biased toward polar residues.

The protein belongs to the amino acid-polyamine-organocation (APC) superfamily. L-type amino acid transporter (LAT) (TC 2.A.3.8) family. As to quaternary structure, disulfide-linked heterodimer composed of the catalytic light chain subunit SLC7A8 and the heavy chain subunit SLC3A2. SLC3A2 acts as chaperones for correct plasma membrane trafficking and stabilization of SLC7A8 and modulates the substrate affinity and specificity of SLC7A8. ICAM-1 associates with the heterodimer SLC3A2/SLC7A8; this interaction regulates SLC7A8 activity. Strongest expression is observed in kidney and moderate expression in placenta and brain, followed by liver, prostate, testis, ovary, lymph node, thymus, spleen, skeletal muscle and heart. Also expressed in fetal liver as well as in the retinal pigment epithelial cell line ARPE-19 and the intestinal epithelial cell line Caco-2.

The protein resides in the cell membrane. It is found in the basolateral cell membrane. The catalysed reaction is L-histidine(in) + L-phenylalanine(out) = L-histidine(out) + L-phenylalanine(in). The enzyme catalyses L-tryptophan(in) + L-phenylalanine(out) = L-tryptophan(out) + L-phenylalanine(in). It catalyses the reaction L-isoleucine(in) + L-phenylalanine(out) = L-isoleucine(out) + L-phenylalanine(in). It carries out the reaction L-valine(in) + L-phenylalanine(out) = L-valine(out) + L-phenylalanine(in). The catalysed reaction is L-leucine(in) + L-phenylalanine(out) = L-leucine(out) + L-phenylalanine(in). The enzyme catalyses L-glutamine(in) + L-phenylalanine(out) = L-glutamine(out) + L-phenylalanine(in). It catalyses the reaction L-cysteine(in) + L-phenylalanine(out) = L-cysteine(out) + L-phenylalanine(in). It carries out the reaction L-phenylalanine(out) + L-methionine(in) = L-phenylalanine(in) + L-methionine(out). The catalysed reaction is L-leucine(out) + L-methionine(in) = L-leucine(in) + L-methionine(out). The enzyme catalyses L-cysteine(out) + L-methionine(in) = L-cysteine(in) + L-methionine(out). It catalyses the reaction S-methylmercury-L-cysteine(out) + L-methionine(in) = S-methylmercury-L-cysteine(in) + L-methionine(out). It carries out the reaction S-methylmercury-L-cysteine(in) + L-leucine(out) = S-methylmercury-L-cysteine(out) + L-leucine(in). The catalysed reaction is S-methylmercury-L-cysteine(in) + L-phenylalanine(out) = S-methylmercury-L-cysteine(out) + L-phenylalanine(in). The enzyme catalyses L-phenylalanine(out) + L-serine(in) = L-phenylalanine(in) + L-serine(out). It catalyses the reaction L-phenylalanine(out) + glycine(in) = L-phenylalanine(in) + glycine(out). It carries out the reaction L-phenylalanine(out) + L-alanine(in) = L-phenylalanine(in) + L-alanine(out). The catalysed reaction is 3,3'-diiodo-L-thyronine(out) = 3,3'-diiodo-L-thyronine(in). The enzyme catalyses 3,3',5-triiodo-L-thyronine(out) = 3,3',5-triiodo-L-thyronine(in). It catalyses the reaction L-dopa(out) + L-phenylalanine(in) = L-dopa(in) + L-phenylalanine(out). With respect to regulation, inhibited by the L-type inhibitor 2-Aminobicyclo-(2,2,1)-heptane-2-carboxylic acid (BCH). In terms of biological role, associates with SLC3A2 to form a functional heterodimeric complex that translocates small and large neutral amino acids with broad specificity and a stoichiometry of 1:1. Functions as amino acid antiporter mediating the influx of extracellular essential amino acids mainly in exchange with the efflux of highly concentrated intracellular amino acids. Has relatively symmetrical selectivities but strongly asymmetrical substrate affinities at both the intracellular and extracellular sides of the transporter. This asymmetry allows SLC7A8 to regulate intracellular amino acid pools (mM concentrations) by exchange with external amino acids (uM concentration range), equilibrating the relative concentrations of different amino acids across the plasma membrane instead of mediating their net uptake. May play an essential role in the reabsorption of neutral amino acids from the epithelial cells to the bloodstream in the kidney. Involved in the uptake of methylmercury (MeHg) when administered as the L-cysteine or D,L-homocysteine complexes, and hence plays a role in metal ion homeostasis and toxicity. Involved in the cellular activity of small molecular weight nitrosothiols, via the stereoselective transport of L-nitrosocysteine (L-CNSO) across the transmembrane. Imports the thyroid hormone diiodothyronine (T2) and to a smaller extent triiodothyronine (T3) but not rT 3 or thyroxine (T4). Mediates the uptake of L-DOPA. May participate in auditory function. This Homo sapiens (Human) protein is Large neutral amino acids transporter small subunit 2.